The primary structure comprises 81 residues: Putative truncated GMC-type inactive oxidoreductase R833 (81 aa).

The protein belongs to the GMC oxidoreductase family.

The polypeptide is Putative truncated GMC-type inactive oxidoreductase R833 (Acanthamoeba polyphaga mimivirus (APMV)).